The sequence spans 768 residues: WD repeat-containing protein 20 homolog (768 aa).

Residues 103 to 122 are disordered; that stretch reads ESPEAVAPTSSTYEHHKNEP. WD repeat units follow at residues 224–264, 302–342, 345–384, and 454–497; these read IEKT…ASSN, IGEG…LLAV, SYFG…VVCR, and CSLA…LNQG. Residues 531 to 608 are disordered; sequence VSPGGAGVNA…VNSESSKKQN (78 aa). A compositionally biased stretch (polar residues) spans 539 to 553; it reads NASSDSQSITNNHTT. Positions 570 to 582 are enriched in low complexity; that stretch reads FSKFTSGSSSATS. A compositionally biased stretch (polar residues) spans 595–608; the sequence is NGASVNSESSKKQN. Residues 646–683 form a WD 5 repeat; it reads VSHDRLTVLEFREDCVVTACQEGYICTWGRPGRYQPKR. The disordered stretch occupies residues 684–749; the sequence is DCINSPGTAS…PNITSPSYRV (66 aa). Residues 688-712 are compositionally biased toward polar residues; sequence SPGTASPESGQKPSGSTSAMTSSYG. Residues 724-733 are compositionally biased toward low complexity; that stretch reads SRSSSTYSNS. A compositionally biased stretch (polar residues) spans 734 to 749; that stretch reads EQQLRSPNITSPSYRV.

In terms of assembly, interacts with usp-46; the interaction increases the catalytic activity of usp-46 in the presence of wdr-48. Expressed in several neurons in the head and tail.

Functionally, together with wdr-48, binds to and stimulates the activity of the deubiquitinating enzyme usp-46, leading to deubiquitination and stabilization of the glr-1 glutamate receptor. The polypeptide is WD repeat-containing protein 20 homolog (Caenorhabditis elegans).